Consider the following 7180-residue polypeptide: Replicase polyprotein 1ab (7180 aa).

The 143-residue stretch at 54 to 196 (LVNHVRVDCS…PWSILLRKGG (143 aa)) folds into the CoV Nsp1 globular domain. One can recognise a BetaCoV Nsp1 C-terminal domain in the interval 217-247 (FNVEDACEEVHLNPRGKYSCKAYALLRGYRG). Residues 251 to 513 (ILFVDQYGCD…AICRFLYMDY (263 aa)) enclose the CoV Nsp2 N-terminal domain. Zn(2+)-binding residues include C390, C395, C411, and C414. Residues 390–414 (CCGDTCGFRGWVPGNMMDGFPCPGC) form a C4 region. The region spanning 518–706 (CGNLEQRAIL…VDKFKTFFKV (189 aa)) is the CoV Nsp2 middle domain. The CoV Nsp2 C-terminal domain maps to 726–832 (SNRVCLAGSK…LDQCWRFPCA (107 aa)). One can recognise a Ubiquitin-like 1 domain in the interval 834–946 (KKVVFNDKPK…MYCSFSAPDE (113 aa)). Residues 1083–1320 (AFDAIYSETL…IAQLYGSCIT (238 aa)) form the Peptidase C16 1 domain. Catalysis depends on C1120, which acts as the For PL1-PRO activity. Residues C1197, C1200, C1223, and C1225 each contribute to the Zn(2+) site. Residues 1197 to 1225 (CLKCGMELKLQGLDAVFFYGDVVSHMCKC) form a C4-type 1 zinc finger. Active-site for PL1-PRO activity residues include H1271 and D1282. The region spanning 1321–1481 (PNVCFVKGDV…VIEKCQVTSV (161 aa)) is the Macro domain. The region spanning 1536–1608 (DDARVFVQAN…VSQIRALLAN (73 aa)) is the DPUP domain. The 56-residue stretch at 1607-1662 (ANKVDVLCTVDGVNFRSCCVAEGEVFGKTLGSVFCDGINVTKVRCSAIHKGKVFFQ) folds into the Ubiquitin-like 2 domain. Positions 1677-1936 (AFGFDEPQLL…CVAYKPDLSQ (260 aa)) constitute a Peptidase C16 2 domain. C1715 functions as the For PL2-PRO activity in the catalytic mechanism. Residues C1793, C1795, C1827, and C1829 each contribute to the Zn(2+) site. Residues 1793-1829 (CKCGVKQEQRKGVDAVMHFGTLDKSGLVKGYNIACTC) form a C4-type 2 zinc finger. Active-site for PL2-PRO activity residues include H1872 and D1886. Positions 1950-2051 (IKAQFRTFEK…TYFNRPSVVC (102 aa)) constitute a Nucleic acid-binding domain. The region spanning 2106–2259 (SVEDQIVMEA…TDNKVIYTTE (154 aa)) is the G2M domain. Helical transmembrane passes span 2228 to 2248 (AIAC…WIKF), 2289 to 2309 (FFLV…NVIL), and 2320 to 2340 (LPMF…VLTI). The interval 2228 to 2465 (AIACYGAVKW…FTLLRFYIVV (238 aa)) is HD1. A 3Ecto domain is found at 2325 to 2386 (GQIVAWVKTT…SINVVQHVVD (62 aa)). Intrachain disulfides connect C2341/C2365 and C2356/C2362. 2 helical membrane passes run 2403–2423 (LVIG…LVGM) and 2445–2465 (LFVF…YIVV). The segment at 2473-2563 (CLCRHVMYGC…ELKRPVNPTD (91 aa)) is Y1. A CoV Nsp3 Y domain is found at 2473–2840 (CLCRHVMYGC…LTTPFSLKGG (368 aa)). Zn(2+) is bound by residues H2477, C2482, C2487, C2490, C2523, H2526, C2530, and C2533. Residues 2477 to 2490 (HVMYGCSKPGCLFC) are ZF1. The segment at 2523–2533 (CTKHQWNCLNC) is ZF2. Residues 2564–2656 (SAYYSVIEVK…MVEKKLITTA (93 aa)) are Y2. The tract at residues 2564–2840 (SAYYSVIEVK…LTTPFSLKGG (277 aa)) is coV-Y. The Y3 stretch occupies residues 2657–2739 (NTGLSVSRTM…KSVMAAVNAG (83 aa)). The segment at 2740–2840 (VEVTDESCNN…LTTPFSLKGG (101 aa)) is Y4. 6 helical membrane passes run 2846–2866 (VLQW…ALMP), 3099–3119 (AFDL…FFAL), 3121–3141 (ASSV…YYLI), 3153–3173 (VVVI…VFQV), 3180–3200 (LYAC…SVVM), and 3205–3225 (LVMY…AVVV). The segment at 2846-3225 (VLQWLFVANL…FCITYVAVVV (380 aa)) is HD2. Residues 3239–3336 (IGTDVRSDGT…TASVTTSFLQ (98 aa)) form the Nsp4C domain. Residues 3337 to 3639 (SGIVKMVSPT…YQQLAGVKLQ (303 aa)) enclose the Peptidase C30 domain. Active-site for 3CL-PRO activity residues include H3377 and C3481. 7 helical membrane-spanning segments follow: residues 3648-3668 (GTCC…SAFV), 3678-3698 (THML…MLLI), 3705-3725 (LTMY…LVVG), 3748-3768 (TYMD…FVTM), 3775-3795 (VFST…WYFG), 3802-3822 (VLLF…LSLA), and 3846-3866 (LVLL…GVLS). Residues 3648–3866 (GTCCWILAST…VCCCYWGVLS (219 aa)) are HD3. In terms of domain architecture, RdRp Nsp7 cofactor spans 3928–4016 (SRLTDVKCAN…DYVRDNTVLQ (89 aa)). The RdRp Nsp8 cofactor domain occupies 4017–4213 (ALQSEFVNMA…HNEVSTVVLQ (197 aa)). Residues 4214-4323 (NNELMPQKLR…GTLSSTVRLQ (110 aa)) form the Nsp9 ssRNA-binding domain. Residues 4324-4461 (AGTATEYASN…CVGTGSQFQS (138 aa)) form the ExoN/MTase coactivator domain. Zn(2+)-binding residues include C4397, C4400, H4406, C4413, C4439, C4442, C4450, and C4452. 2 zinc fingers span residues 4397 to 4413 (CIYC…DGLC) and 4439 to 4452 (CQVC…SCSC). The region spanning 4466-4721 (FLNRVRGTSV…DSELFVNGTY (256 aa)) is the NiRAN domain. Residues N4669 and D4678 each coordinate Mn(2+). The Nsp12 Interface domain occupies 4722–4820 (REFDLVQYDF…MNMDVDTHRY (99 aa)). Zn(2+) is bound by residues H4751, C4757, C4762, C4766, and C4943. The 568-residue stretch at 4821–5388 (RLSLKDLLLY…NMYLRSAVMQ (568 aa)) folds into the Nsp12 RNA-dependent RNA polymerase domain. The segment at 4823-5037 (SLKDLLLYAA…HQKCLKSIAA (215 aa)) is rdRp Fingers N-ter. Residues 5038 to 5076 (TRGVPVVIGTTKFYGGWDDMLRRLIKDVDSPVLMGWDYP) form a rdRp Palm N-ter region. The RdRp catalytic domain occupies 5068–5230 (PVLMGWDYPK…CYNSEFASKG (163 aa)). The segment at 5077 to 5135 (KCDRAMPNILRIVSSLVLARKHDSCCSHTDRFYRLANECAQVLGEIVMCGGCYYVKPGG) is rdRp Fingers C-ter. H5098, C5101, and C5102 together coordinate Zn(2+). The segment at 5136–5271 (TSSGDATTAF…EKGPHEFCSQ (136 aa)) is rdRp Palm C-ter. Active-site residues include S5215, D5216, and D5217. A rdRp Thumb region spans residues 5272-5388 (HTMLVKMDGD…NMYLRSAVMQ (117 aa)). Residues 5389–5501 (SVGACVVCSS…EDFNKIASCK (113 aa)) enclose the CV ZBD domain. Positions 5393, 5396, 5404, 5407, 5414, 5417, 5421, 5427, 5438, 5443, 5460, and 5463 each coordinate Zn(2+). In terms of domain architecture, (+)RNA virus helicase ATP-binding spans 5644–5825 (SVPETFQNNV…MCCLGPDIFL (182 aa)). An ATP-binding site is contributed by 5669–5676 (GPPGTGKS). The 178-residue stretch at 5826–6003 (GTCYRCPKEI…FKDCSKSYVG (178 aa)) folds into the (+)RNA virus helicase C-terminal domain. The 216-residue stretch at 6057 to 6272 (LFITRDEAIK…RCLAVHDCFC (216 aa)) folds into the ExoN domain. Residues D6075, E6077, and E6176 contribute to the active site. 7 residues coordinate Zn(2+): C6192, C6195, C6211, H6214, H6242, C6246, and H6249. Residues H6253 and D6258 contribute to the active site. C6264 serves as a coordination point for Zn(2+). The N7-MTase domain maps to 6281–6507 (YPIISNEVSV…NLWNTFTRLQ (227 aa)). 6316–6322 (DIGNPKG) provides a ligand contact to S-adenosyl-L-methionine. The interval 6394 to 6408 (CNGGSLYVNKHAFHT) is gpppA-binding. 4 residues coordinate Zn(2+): C6432, C6453, C6464, and H6467. The 61-residue stretch at 6508-6568 (SLENVVYNLV…NVAVELFAER (61 aa)) folds into the Nsp15 N-terminal oligomerization domain. In terms of domain architecture, AV-Nsp11N/CoV-Nsp15M spans 6569–6689 (SIRPHPELKL…FAMRRDGDDV (121 aa)). The NendoU domain maps to 6739 to 6878 (SPRSEMEKDF…NEEKVMTFYP (140 aa)). The 295-residue stretch at 6883–7177 (AADWKPGYVM…KEVFVGDSLV (295 aa)) folds into the Nidovirus-type SAM-dependent 2'-O-MTase domain. Active-site residues include K6927, D7011, K7051, and E7084.

Belongs to the coronaviruses polyprotein 1ab family. Interacts with host PHB and PHB2. In terms of assembly, interacts with papain-like protease nsp3 and non-structural protein 6. As to quaternary structure, monomer. Homodimer. Only the homodimer shows catalytic activity. Interacts with nsp8 and nsp12 to form the replication-transcription complex (RTC): nsp12, nsp7, two subunits of nsp8, and up to two subunits of nsp13. In terms of assembly, interacts with nsp7, nsp13 and nsp12 to form the replication-transcription complex (RTC): nsp12, nsp7, two subunits of nsp8, and up to two subunits of nsp13. As to quaternary structure, interacts with nsp12. Interacts with proofreading exoribonuclease nsp14 and 2'-O-methyltransferase nsp16; these interactions enhance nsp14 and nsp16 enzymatic activities. In terms of assembly, interacts with nsp7 and nsp8 to form the replication-transcription complex (RTC): nsp12, nsp7, two subunits of nsp8, and up to two subunits of nsp13. Interacts with nsp9. As to quaternary structure, interacts with nsp8 to form the replication-transcription complex (RTC): nsp12, nsp7, two subunits of nsp8, and up to two subunits of nsp13. The cofactor is Mn(2+). Mg(2+) is required as a cofactor. In terms of processing, specific enzymatic cleavages in vivo by its own proteases yield mature proteins. 3CL-PRO and PL-PRO proteinases are autocatalytically processed.

It is found in the host membrane. Its subcellular location is the host cytoplasm. The protein resides in the host perinuclear region. It localises to the host endoplasmic reticulum-Golgi intermediate compartment. It catalyses the reaction RNA(n) + a ribonucleoside 5'-triphosphate = RNA(n+1) + diphosphate. It carries out the reaction ATP + H2O = ADP + phosphate + H(+). The catalysed reaction is Thiol-dependent hydrolysis of ester, thioester, amide, peptide and isopeptide bonds formed by the C-terminal Gly of ubiquitin (a 76-residue protein attached to proteins as an intracellular targeting signal).. The enzyme catalyses a 5'-end (N(7)-methyl 5'-triphosphoguanosine)-ribonucleoside in mRNA + S-adenosyl-L-methionine = a 5'-end (N(7)-methyl 5'-triphosphoguanosine)-(2'-O-methyl-ribonucleoside) in mRNA + S-adenosyl-L-homocysteine + H(+). It catalyses the reaction uridylyl-uridylyl-ribonucleotide-RNA = a 3'-end uridylyl-2',3'-cyclophospho-uridine-RNA + a 5'-end dephospho-ribonucleoside-RNA. It carries out the reaction a 5'-end diphospho-ribonucleoside in mRNA + GTP + H(+) = a 5'-end (5'-triphosphoguanosine)-ribonucleoside in mRNA + diphosphate. The catalysed reaction is a 5'-end (5'-triphosphoguanosine)-ribonucleoside in mRNA + S-adenosyl-L-methionine = a 5'-end (N(7)-methyl 5'-triphosphoguanosine)-ribonucleoside in mRNA + S-adenosyl-L-homocysteine. The replicase polyprotein of coronaviruses is a multifunctional protein: it contains the activities necessary for the transcription of negative stranded RNA, leader RNA, subgenomic mRNAs and progeny virion RNA as well as proteinases responsible for the cleavage of the polyprotein into functional products. Functionally, inhibits host translation by interacting with the 40S ribosomal subunit. The nsp1-40S ribosome complex further induces an endonucleolytic cleavage near the 5'UTR of host mRNAs, targeting them for degradation. Viral mRNAs are not susceptible to nsp1-mediated endonucleolytic RNA cleavage thanks to the presence of a 5'-end leader sequence and are therefore protected from degradation. By suppressing host gene expression, nsp1 facilitates efficient viral gene expression in infected cells and evasion from host immune response. Its function is as follows. May play a role in the modulation of host cell survival signaling pathway by interacting with host PHB and PHB2. Indeed, these two proteins play a role in maintaining the functional integrity of the mitochondria and protecting cells from various stresses. In terms of biological role, responsible for the cleavages located at the N-terminus of the replicase polyprotein. In addition, PL-PRO possesses a deubiquitinating/deISGylating activity and processes both 'Lys-48'- and 'Lys-63'-linked polyubiquitin chains from cellular substrates. Participates together with nsp4 in the assembly of virally-induced cytoplasmic double-membrane vesicles necessary for viral replication. Antagonizes innate immune induction of type I interferon by blocking the phosphorylation, dimerization and subsequent nuclear translocation of host IRF3. Also prevents host NF-kappa-B signaling. Participates in the assembly of virally-induced cytoplasmic double-membrane vesicles necessary for viral replication. Functionally, cleaves the C-terminus of replicase polyprotein at 11 sites. Recognizes substrates containing the core sequence [ILMVF]-Q-|-[SGACN]. Also able to bind an ADP-ribose-1''-phosphate (ADRP). Its function is as follows. Plays a role in the initial induction of autophagosomes from host endoplasmic reticulum. Later, limits the expansion of these phagosomes that are no longer able to deliver viral components to lysosomes. In terms of biological role, forms a hexadecamer with nsp8 (8 subunits of each) that may participate in viral replication by acting as a primase. Alternatively, may synthesize substantially longer products than oligonucleotide primers. Forms a hexadecamer with nsp7 (8 subunits of each) that may participate in viral replication by acting as a primase. Alternatively, may synthesize substantially longer products than oligonucleotide primers. Functionally, forms a primer, NSP9-pU, which is utilized by the polymerase for the initiation of RNA chains. Interacts with ribosome signal recognition particle RNA (SRP). Together with NSP8, suppress protein integration into the cell membrane, thereby disrupting host immune defenses. Its function is as follows. Plays a pivotal role in viral transcription by stimulating both nsp14 3'-5' exoribonuclease and nsp16 2'-O-methyltransferase activities. Therefore plays an essential role in viral mRNAs cap methylation. In terms of biological role, RNA-directed RNA polymerase that catalyzes the transcription of viral genomic and subgenomic RNAs. Acts in complex with nsp7 and nsp8 to transcribe both the minus and positive strands of genomic RNA. The kinase-like NiRAN domain of NSP12 attaches one or more nucleotides to the amino terminus of NSP9, forming a covalent RNA-protein intermediate that serves as transcription/replication primer. Subgenomic RNAs (sgRNAs) are formed by discontinuous transcription: The polymerase has the ability to pause at transcription-regulating sequences (TRS) and jump to the leader TRS, resulting in a major deletion. This creates a series of subgenomic RNAs that are replicated, transcribed and translated. In addition, Nsp12 is a subunit of the viral RNA capping enzyme that catalyzes the RNA guanylyltransferase reaction for genomic and sub-genomic RNAs. Subsequently, the NiRAN domain transfers RNA to GDP, and forms the core cap structure GpppA-RNA. Multi-functional protein with a zinc-binding domain in N-terminus displaying RNA and DNA duplex-unwinding activities with 5' to 3' polarity. Activity of helicase is dependent on magnesium. Functionally, plays a role in viral RNA synthesis through two distinct activities. The N7-guanine methyltransferase activity plays a role in the formation of the cap structure GpppA-RNA. The proofreading exoribonuclease reduces the sensitivity of the virus to RNA mutagens during replication. This activity acts on both ssRNA and dsRNA in a 3'-5' direction. Its function is as follows. Plays a role in viral transcription/replication and prevents the simultaneous activation of host cell dsRNA sensors, such as MDA5/IFIH1, OAS, and PKR. Acts by degrading the 5'-polyuridines generated during replication of the poly(A) region of viral genomic and subgenomic RNAs. Catalyzes a two-step reaction in which a 2'3'-cyclic phosphate (2'3'-cP) is first generated by 2'-O transesterification, which is then hydrolyzed to a 3'-phosphate (3'-P). If not degraded, poly(U) RNA would hybridize with poly(A) RNA tails and activate host dsRNA sensors. In terms of biological role, 2'-O-methyltransferase: Methyltransferase that mediates mRNA cap 2'-O-ribose methylation to the 5'-cap structure of viral mRNAs. N7-methyl guanosine cap is a prerequisite for binding of nsp16. Therefore plays an essential role in viral mRNAs cap methylation which is essential to evade immune system. The polypeptide is Replicase polyprotein 1ab (rep) (Mus musculus (Mouse)).